Here is a 178-residue protein sequence, read N- to C-terminus: Ribonuclease M5 (178 aa).

The 85-residue stretch at 10 to 94 (DGVIVCEGKT…YVDMNARLKN (85 aa)) folds into the Toprim domain. The Mg(2+) site is built by glutamate 16, aspartate 62, and aspartate 64.

Belongs to the ribonuclease M5 family. It depends on Mg(2+) as a cofactor.

Its subcellular location is the cytoplasm. It carries out the reaction Endonucleolytic cleavage of RNA, removing 21 and 42 nucleotides, respectively, from the 5'- and 3'-termini of a 5S-rRNA precursor.. Required for correct processing of both the 5' and 3' ends of 5S rRNA precursor. Cleaves both sides of a double-stranded region yielding mature 5S rRNA in one step. This Mycoplasma genitalium (strain ATCC 33530 / DSM 19775 / NCTC 10195 / G37) (Mycoplasmoides genitalium) protein is Ribonuclease M5 (rnmV).